Reading from the N-terminus, the 66-residue chain is Beta-mammal toxin Co2 (66 aa).

Positions 1 to 66 constitute an LCN-type CS-alpha/beta domain; that stretch reads KEGYIVNYHD…VWPLPKKRCN (66 aa). Disulfide bonds link Cys-12/Cys-65, Cys-16/Cys-41, Cys-25/Cys-46, and Cys-29/Cys-48.

In terms of tissue distribution, expressed by the venom gland.

Its subcellular location is the secreted. Beta toxins bind voltage-independently at site-4 of sodium channels (Nav) and shift the voltage of activation toward more negative potentials thereby affecting sodium channel activation and promoting spontaneous and repetitive firing. This toxin acts on human Nav1.1/SCN1A, Nav1.2/SCN2A, Nav1.4/SCN4A and Nav1.6/SCN8A voltage-gated sodium channels. Also, it reduces the peak of sodium currents in Nav1.5/SCN5A at all potentials. In vivo, is lethal to mice when intraperitoneally injected at a dose of 5ug. No activity is observed when injected into crickets or woodlice. In Centruroides ornatus (Scorpion), this protein is Beta-mammal toxin Co2.